Reading from the N-terminus, the 202-residue chain is Histone H1 (202 aa).

Disordered stretches follow at residues 1 to 50 and 114 to 202; these read MTAI…VTHP and YKLS…KIAV. Residues 18–38 are compositionally biased toward basic and acidic residues; that stretch reads EASKVKEQAPATDKKPRAPKE. Positions 48–118 constitute an H15 domain; the sequence is THPPYFQMIK…KIKASYKLSE (71 aa). Residues 160–202 are compositionally biased toward basic residues; that stretch reads KAKATPKPKKVGAKRTRKSTPAKAKQPKSIKSPAAKRAKKIAV.

This sequence belongs to the histone H1/H5 family.

It localises to the nucleus. It is found in the chromosome. In terms of biological role, histones H1 are necessary for the condensation of nucleosome chains into higher-order structures. In Solanum pennellii (Tomato), this protein is Histone H1.